The sequence spans 1848 residues: Cellulose-binding protein A (1848 aa).

The N-terminal stretch at 1–28 (MQKKKSLNLLLALMMVFALVLPSIPALA) is a signal peptide. Residues 29–190 (ATSSMSVEFY…GAKVLGTAPG (162 aa)) enclose the CBM3 domain. Cohesin domains are found at residues 291–428 (VTAT…TVTI), 435–570 (MQIS…SVTI), 668–801 (VTAT…SVTI), 810–943 (VTAT…SVTI), 952–1085 (VTAT…SVTI), 1094–1227 (VTAT…SVTI), 1236–1369 (VTAT…SVTI), 1377–1511 (VKAT…RLTI), and 1709–1847 (FAVK…SVKV).

The N-terminus is blocked. Post-translationally, glycosylated.

Its subcellular location is the secreted. In terms of biological role, binds to cellulose fibers and coordinates cellulase enzymes. The chain is Cellulose-binding protein A (cbpA) from Clostridium cellulovorans.